We begin with the raw amino-acid sequence, 140 residues long: MIDIQGIKEALPHRYPMLLVDRVLEVSEDTIVAIKNVTINEPFFNGHFPQYPVMPGVLIMEALAQTAGVLELSKPENKGKLVFYAGMDKVKFKKQVVPGDQLVMTATFVKRRGTIAVVEAKAEVDGKLAASGILTFAIGN.

Histidine 47 is an active-site residue.

Belongs to the thioester dehydratase family. FabZ subfamily.

The protein localises to the cytoplasm. The catalysed reaction is a (3R)-hydroxyacyl-[ACP] = a (2E)-enoyl-[ACP] + H2O. Functionally, involved in unsaturated fatty acids biosynthesis. Catalyzes the dehydration of short chain beta-hydroxyacyl-ACPs and long chain saturated and unsaturated beta-hydroxyacyl-ACPs. The chain is 3-hydroxyacyl-[acyl-carrier-protein] dehydratase FabZ from Streptococcus pneumoniae serotype 2 (strain D39 / NCTC 7466).